Reading from the N-terminus, the 508-residue chain is Photosystem II CP47 reaction center protein (508 aa).

A run of 6 helical transmembrane segments spans residues 21–36 (SVHIMHTALVAGWAGS), 101–115 (IMFSGLCFLAAIWHW), 140–156 (GIHLFLAGVACFGFGAF), 203–218 (IAAGTLGILAGLFHLS), 237–252 (VLSSSIAAVFFAAFVV), and 457–472 (SFALLFFFGHIWHGAR).

This sequence belongs to the PsbB/PsbC family. PsbB subfamily. PSII is composed of 1 copy each of membrane proteins PsbA, PsbB, PsbC, PsbD, PsbE, PsbF, PsbH, PsbI, PsbJ, PsbK, PsbL, PsbM, PsbT, PsbX, PsbY, PsbZ, Psb30/Ycf12, at least 3 peripheral proteins of the oxygen-evolving complex and a large number of cofactors. It forms dimeric complexes. The cofactor is Binds multiple chlorophylls. PSII binds additional chlorophylls, carotenoids and specific lipids..

The protein resides in the plastid. It is found in the chloroplast thylakoid membrane. Functionally, one of the components of the core complex of photosystem II (PSII). It binds chlorophyll and helps catalyze the primary light-induced photochemical processes of PSII. PSII is a light-driven water:plastoquinone oxidoreductase, using light energy to abstract electrons from H(2)O, generating O(2) and a proton gradient subsequently used for ATP formation. This is Photosystem II CP47 reaction center protein from Guizotia abyssinica (Niger).